Here is a 480-residue protein sequence, read N- to C-terminus: Sulfate adenylyltransferase subunit 1 (480 aa).

Residues 30-248 enclose the tr-type G domain; sequence KGLLRFLTCG…TVDVKKEASK (219 aa). The interval 39-46 is G1; sequence GSVDDGKS. 39–46 lines the GTP pocket; it reads GSVDDGKS. Residues 97-101 are G2; it reads GITID. Residues 118-121 form a G3 region; the sequence is DTPG. Residues 118-122 and 173-176 contribute to the GTP site; these read DTPGH and NKMD. Residues 173 to 176 are G4; it reads NKMD. The segment at 211–213 is G5; it reads SAL.

The protein belongs to the TRAFAC class translation factor GTPase superfamily. Classic translation factor GTPase family. CysN/NodQ subfamily. Heterodimer composed of CysD, the smaller subunit, and CysN.

It carries out the reaction sulfate + ATP + H(+) = adenosine 5'-phosphosulfate + diphosphate. It functions in the pathway sulfur metabolism; hydrogen sulfide biosynthesis; sulfite from sulfate: step 1/3. In terms of biological role, with CysD forms the ATP sulfurylase (ATPS) that catalyzes the adenylation of sulfate producing adenosine 5'-phosphosulfate (APS) and diphosphate, the first enzymatic step in sulfur assimilation pathway. APS synthesis involves the formation of a high-energy phosphoric-sulfuric acid anhydride bond driven by GTP hydrolysis by CysN coupled to ATP hydrolysis by CysD. This Photorhabdus laumondii subsp. laumondii (strain DSM 15139 / CIP 105565 / TT01) (Photorhabdus luminescens subsp. laumondii) protein is Sulfate adenylyltransferase subunit 1.